Here is a 478-residue protein sequence, read N- to C-terminus: Endoglucanase 18 (478 aa).

The first 21 residues, 1–21 (MGKLLVVMLIGMFLAFESLEA), serve as a signal peptide directing secretion. A glycan (N-linked (GlcNAc...) asparagine) is linked at Asn-29. The active-site Nucleophile is Asp-76. His-398 is an active-site residue. The segment at 433–452 (HTGAIVGGPNSSDQYSDKRT) is disordered. Asn-442 carries an N-linked (GlcNAc...) asparagine glycan. Catalysis depends on residues Asp-449 and Glu-458.

Belongs to the glycosyl hydrolase 9 (cellulase E) family.

The protein resides in the secreted. The catalysed reaction is Endohydrolysis of (1-&gt;4)-beta-D-glucosidic linkages in cellulose, lichenin and cereal beta-D-glucans.. The polypeptide is Endoglucanase 18 (Arabidopsis thaliana (Mouse-ear cress)).